We begin with the raw amino-acid sequence, 327 residues long: Deoxynucleotidyltransferase terminal-interacting protein 1 (327 aa).

Gly residues predominate over residues 1 to 11 (MGATGDTGGPR). 2 disordered regions span residues 1-34 (MGATGDTGGPRPGTESRRPGNVGNAGAAGQPVLT) and 146-172 (KRGRQAEEESHREAPFPKRGKVGLPGH). Positions 55-146 (MTTSFTDPAI…RLAHELPGIK (92 aa)) are important for dimerization. The segment covering 146-161 (KRGRQAEEESHREAPF) has biased composition (basic and acidic residues). A DNA-binding region (a.T hook) is located at residues 157–171 (REAPFPKRGKVGLPG). The Nuclear localization signal motif lies at 162–168 (PKRGKVG). An important for DNA and nucleosome binding region spans residues 195 to 314 (REGPKWDPAR…MRKYMETLRT (120 aa)). Residues 214–235 (GSRANKALGMGGTRGRIYIKHP) constitute a DNA-binding region (H-T-H motif).

As to quaternary structure, monomer and homodimer. A minor proportion may form homotrimers. Interacts with ZNF541. Interacts with the terminal deoxynucleotidyltransferase DNTT. Interacts with TRERF1. Identified in a histone deacetylase complex that contains DNTTIP1, HDAC1 and MIDEAS; this complex assembles into a tetramer that contains four copies of each protein chain. Component of a histone deacetylase complex containing DNTTIP1, ZNF541, HDAC1 and HDAC2. Identified in a complex with KCTD19, HDAC1, HDAC2 and ZNF541. As to expression, expressed in thymus, bone marrow and spleen.

The protein localises to the nucleus. Functionally, increases DNTT terminal deoxynucleotidyltransferase activity (in vitro). Also acts as a transcriptional regulator, binding to the consensus sequence 5'-GNTGCATG-3' following an AT-tract. Associates with RAB20 promoter and positively regulates its transcription. Binds DNA and nucleosomes; may recruit HDAC1 complexes to nucleosomes or naked DNA. This chain is Deoxynucleotidyltransferase terminal-interacting protein 1 (Dnttip1), found in Rattus norvegicus (Rat).